We begin with the raw amino-acid sequence, 291 residues long: Ribosomal RNA small subunit methyltransferase A (291 aa).

6 residues coordinate S-adenosyl-L-methionine: N29, L31, G56, E77, D102, and N127.

The protein belongs to the class I-like SAM-binding methyltransferase superfamily. rRNA adenine N(6)-methyltransferase family. RsmA subfamily.

It localises to the cytoplasm. The catalysed reaction is adenosine(1518)/adenosine(1519) in 16S rRNA + 4 S-adenosyl-L-methionine = N(6)-dimethyladenosine(1518)/N(6)-dimethyladenosine(1519) in 16S rRNA + 4 S-adenosyl-L-homocysteine + 4 H(+). Specifically dimethylates two adjacent adenosines (A1518 and A1519) in the loop of a conserved hairpin near the 3'-end of 16S rRNA in the 30S particle. May play a critical role in biogenesis of 30S subunits. This Geobacillus sp. (strain WCH70) protein is Ribosomal RNA small subunit methyltransferase A.